Reading from the N-terminus, the 86-residue chain is MAEKRKYSRKYCKFTEAKIDFIDYKDTSLLKYCLSERFKIMPRRLTGTSKRYQEMVEKAIKRARHAAIIPYIVDRKNVVSNPFEGL.

It belongs to the bacterial ribosomal protein bS18 family. In terms of assembly, part of the 30S ribosomal subunit. Forms a tight heterodimer with protein bS6.

In terms of biological role, binds as a heterodimer with protein bS6 to the central domain of the 16S rRNA, where it helps stabilize the platform of the 30S subunit. The chain is Small ribosomal subunit protein bS18 from Campylobacter concisus (strain 13826).